We begin with the raw amino-acid sequence, 902 residues long: Gamma-tubulin complex component 2 (902 aa).

Tyr-83 is subject to Phosphotyrosine. Residues Glu-875 to Gln-902 are disordered.

Belongs to the TUBGCP family. In terms of assembly, component of the gamma-tubulin ring complex (gTuRC) consisting of TUBGCP2, TUBGCP3, TUBGCP4, TUBGCP5 and TUBGCP6 and gamma-tubulin TUBG1 or TUBG2. TUBGCP2, TUBGCP3, TUBGCP4, TUBGCP5 and TUBGCP6 assemble in a 5:5:2:1:1 stoichiometry; each is associated with a gamma-tubulin, thereby arranging 14 gamma-tubulins in a helical manner. Gamma-tubulin at the first position is blocked by TUBGCP3 at the last position, allowing 13 protafilaments to grow into a microtubule. The gTuRC (via TUBGCP3 and TUBGCP6) interacts with ACTB and MZT1; the interactions form a luminal bridge that stabilizes the initial structure during complex assembly. The gTuRC (via TUBGCP2) interacts with MZT2A/MZT2B and CDK5RAP2 (via CM1 motif); the interactions play a role in gTuRC activation. Interacts with ATF5; the ATF5:PCNT:polyglutamylated tubulin (PGT) tripartite unites the mother centriole and the pericentriolar material (PCM) in the centrosome.

It localises to the cytoplasm. The protein resides in the cytoskeleton. The protein localises to the microtubule organizing center. Its subcellular location is the centrosome. Its function is as follows. Component of the gamma-tubulin ring complex (gTuRC) which mediates microtubule nucleation. The gTuRC regulates the minus-end nucleation of alpha-beta tubulin heterodimers that grow into microtubule protafilaments, a critical step in centrosome duplication and spindle formation. Plays a role in neuronal migration. This is Gamma-tubulin complex component 2 (TUBGCP2) from Pongo abelii (Sumatran orangutan).